Reading from the N-terminus, the 380-residue chain is Cytochrome b (380 aa).

4 consecutive transmembrane segments (helical) span residues 33–53, 77–98, 113–133, and 178–198; these read FGSL…FLAM, WLIR…YMHI, WNIG…GYVL, and FFAF…LHLL. Heme b is bound by residues His-83 and His-97. Heme b contacts are provided by His-182 and His-196. His-201 serves as a coordination point for a ubiquinone. 4 helical membrane passes run 226–246, 288–308, 320–340, and 347–367; these read YKDL…ALFA, LGGV…PFLH, LTQM…WIGG, and FIII…VLFP.

This sequence belongs to the cytochrome b family. As to quaternary structure, the cytochrome bc1 complex contains 3 respiratory subunits (MT-CYB, CYC1 and UQCRFS1), 2 core proteins (UQCRC1 and UQCRC2) and probably 6 low-molecular weight proteins. It depends on heme b as a cofactor.

It is found in the mitochondrion inner membrane. Its function is as follows. Component of the ubiquinol-cytochrome c reductase complex (complex III or cytochrome b-c1 complex) that is part of the mitochondrial respiratory chain. The b-c1 complex mediates electron transfer from ubiquinol to cytochrome c. Contributes to the generation of a proton gradient across the mitochondrial membrane that is then used for ATP synthesis. The protein is Cytochrome b (mt-cyb) of Gadus morhua (Atlantic cod).